The sequence spans 449 residues: Glutamyl-tRNA reductase (449 aa).

Substrate is bound by residues 58-61, S121, 126-128, and Q132; these read TCNR and ETQ. The active-site Nucleophile is the C59. 203-208 is an NADP(+) binding site; sequence GLGEMA.

This sequence belongs to the glutamyl-tRNA reductase family. Homodimer.

It carries out the reaction (S)-4-amino-5-oxopentanoate + tRNA(Glu) + NADP(+) = L-glutamyl-tRNA(Glu) + NADPH + H(+). It functions in the pathway porphyrin-containing compound metabolism; protoporphyrin-IX biosynthesis; 5-aminolevulinate from L-glutamyl-tRNA(Glu): step 1/2. Its function is as follows. Catalyzes the NADPH-dependent reduction of glutamyl-tRNA(Glu) to glutamate 1-semialdehyde (GSA). This chain is Glutamyl-tRNA reductase, found in Helicobacter pylori (strain P12).